Here is a 267-residue protein sequence, read N- to C-terminus: Small ribosomal subunit protein uS2c (267 aa).

The tract at residues 237–267 (KQKIKKTGVKISGNRRTSSITKKRNPASSKI) is disordered. A compositionally biased stretch (polar residues) spans 250–267 (NRRTSSITKKRNPASSKI).

It belongs to the universal ribosomal protein uS2 family.

Its subcellular location is the plastid. It is found in the chloroplast. The chain is Small ribosomal subunit protein uS2c (rps2) from Chlorella vulgaris (Green alga).